A 68-amino-acid chain; its full sequence is DNA-directed RNA polymerase subunit omega (68 aa).

The protein belongs to the RNA polymerase subunit omega family. The RNAP catalytic core consists of 2 alpha, 1 beta, 1 beta' and 1 omega subunit. When a sigma factor is associated with the core the holoenzyme is formed, which can initiate transcription.

It carries out the reaction RNA(n) + a ribonucleoside 5'-triphosphate = RNA(n+1) + diphosphate. Its function is as follows. Promotes RNA polymerase assembly. Latches the N- and C-terminal regions of the beta' subunit thereby facilitating its interaction with the beta and alpha subunits. This chain is DNA-directed RNA polymerase subunit omega, found in Desulforapulum autotrophicum (strain ATCC 43914 / DSM 3382 / VKM B-1955 / HRM2) (Desulfobacterium autotrophicum).